The sequence spans 317 residues: Small ribosomal subunit protein uS2 (317 aa).

The segment at 277-317 is disordered; that stretch reads SDWTAPAANPANAAAAGAPAPAPAAATTTESWGGSGAENWG. Positions 281-302 are enriched in low complexity; sequence APAANPANAAAAGAPAPAPAAA.

It belongs to the universal ribosomal protein uS2 family. As to quaternary structure, component of the small ribosomal subunit. Mature ribosomes consist of a small (40S) and a large (60S) subunit. The 40S subunit contains about 33 different proteins and 1 molecule of RNA (18S). The 60S subunit contains about 49 different proteins and 3 molecules of RNA (28S, 5.8S and 5S). Interacts with ribosomal protein S21.

The protein localises to the cytoplasm. Its function is as follows. Required for the assembly and/or stability of the 40S ribosomal subunit. Required for the processing of the 20S rRNA-precursor to mature 18S rRNA in a late step of the maturation of 40S ribosomal subunits. This Urechis caupo (Innkeeper worm) protein is Small ribosomal subunit protein uS2.